Consider the following 159-residue polypeptide: Ribosomal RNA large subunit methyltransferase H (159 aa).

Residues Gly108 and Phe127–Met132 contribute to the S-adenosyl-L-methionine site.

Belongs to the RNA methyltransferase RlmH family. As to quaternary structure, homodimer.

It localises to the cytoplasm. It catalyses the reaction pseudouridine(1915) in 23S rRNA + S-adenosyl-L-methionine = N(3)-methylpseudouridine(1915) in 23S rRNA + S-adenosyl-L-homocysteine + H(+). Specifically methylates the pseudouridine at position 1915 (m3Psi1915) in 23S rRNA. This Lactobacillus helveticus (strain DPC 4571) protein is Ribosomal RNA large subunit methyltransferase H.